Consider the following 183-residue polypeptide: MTEYKLVVVGAGGVGKSALTIQLIQNHFVDEYDPTIEDSYRKQVVIDGETCLLDILDTAGQEEYSAMRDQYMRTGEGFLCVFAINNTKSFEDIHHYREQIKRVKDSEDVPMVLVGNKCDLPSRSVDTKQAQDLARSYGIPFIETSAKTRQRVEDAFYTLVREIRQYRLRKLSKEEETTQCIKL.

GTP is bound at residue 10 to 17 (GAGGVGKS). Positions 32–40 (YDPTIEDSY) match the Effector region motif. GTP is bound by residues 57–61 (DTAGQ) and 116–119 (NKCD).

It belongs to the small GTPase superfamily. Ras family.

Its subcellular location is the cell membrane. It catalyses the reaction GTP + H2O = GDP + phosphate + H(+). Its activity is regulated as follows. Alternates between an inactive form bound to GDP and an active form bound to GTP. Activated by a guanine nucleotide-exchange factor (GEF) and inactivated by a GTPase-activating protein (GAP). Its function is as follows. Ras proteins bind GDP/GTP and possess intrinsic GTPase activity. The protein is Ras-like protein of Carassius auratus (Goldfish).